A 412-amino-acid polypeptide reads, in one-letter code: Transcription factor IIIA (412 aa).

The disordered stretch occupies residues 1-20; it reads MSESDETKSISSLISSSSSS. The span at 9–20 shows a compositional bias: low complexity; it reads SISSLISSSSSS. 7 C2H2-type zinc fingers span residues 25-49, 55-79, 85-107, 111-136, 140-162, 169-194, and 197-219; these read YICT…LRTH, YKCT…IVSH, FHCS…EITH, FKCT…LSVH, LTCK…KLKH, YQCD…KQSH, and LKCP…MLSH. The segment at 228 to 252 adopts a C2H2-type 8; degenerate zinc-finger fold; it reads WTCDYCDVGKFAKKNELVEHYNIFH. The interval 285–316 is disordered; sequence LETEKLKVEEDEEDEEDSLDEKRSDVRSDSMS. Acidic residues predominate over residues 293 to 303; it reads EEDEEDEEDSL. A C2H2-type 9 zinc finger spans residues 345–369; that stretch reads INCPKNNCDRMFSREYDLRRHLKWH.

The protein resides in the nucleus. Transcription factor required for transcription of 5S rRNA by RNA polymerase III. The protein is Transcription factor IIIA (PZF1) of Candida albicans (strain SC5314 / ATCC MYA-2876) (Yeast).